A 258-amino-acid chain; its full sequence is Shikimate dehydrogenase (NADP(+)) (258 aa).

Shikimate contacts are provided by residues 14–16 and T61; that span reads SES. K65 (proton acceptor) is an active-site residue. Shikimate-binding residues include N86 and D101. Residues 125-129 and L211 contribute to the NADP(+) site; that span reads GSGGS. Shikimate is bound at residue Y213. G234 lines the NADP(+) pocket.

Belongs to the shikimate dehydrogenase family. Homodimer.

The enzyme catalyses shikimate + NADP(+) = 3-dehydroshikimate + NADPH + H(+). Its pathway is metabolic intermediate biosynthesis; chorismate biosynthesis; chorismate from D-erythrose 4-phosphate and phosphoenolpyruvate: step 4/7. Involved in the biosynthesis of the chorismate, which leads to the biosynthesis of aromatic amino acids. Catalyzes the reversible NADPH linked reduction of 3-dehydroshikimate (DHSA) to yield shikimate (SA). The sequence is that of Shikimate dehydrogenase (NADP(+)) from Clostridium botulinum (strain ATCC 19397 / Type A).